A 274-amino-acid polypeptide reads, in one-letter code: NH(3)-dependent NAD(+) synthetase (274 aa).

46–53 contributes to the ATP binding site; sequence GISGGQDS. Aspartate 52 is a binding site for Mg(2+). Residue arginine 140 coordinates deamido-NAD(+). Residue threonine 160 participates in ATP binding. A Mg(2+)-binding site is contributed by glutamate 165. Lysine 173 and aspartate 180 together coordinate deamido-NAD(+). The ATP site is built by lysine 189 and threonine 211. 260–261 lines the deamido-NAD(+) pocket; that stretch reads HK.

Belongs to the NAD synthetase family. In terms of assembly, homodimer.

The catalysed reaction is deamido-NAD(+) + NH4(+) + ATP = AMP + diphosphate + NAD(+) + H(+). It functions in the pathway cofactor biosynthesis; NAD(+) biosynthesis; NAD(+) from deamido-NAD(+) (ammonia route): step 1/1. Catalyzes the ATP-dependent amidation of deamido-NAD to form NAD. Uses ammonia as a nitrogen source. In Listeria monocytogenes serotype 4b (strain CLIP80459), this protein is NH(3)-dependent NAD(+) synthetase.